Consider the following 168-residue polypeptide: Phosphopantetheine adenylyltransferase (168 aa).

A substrate-binding site is contributed by Thr17. Residues 17–18 (TF) and His25 each bind ATP. Positions 49, 81, and 95 each coordinate substrate. ATP contacts are provided by residues 96–98 (GLR), Glu106, and 131–137 (LMYISST).

Belongs to the bacterial CoaD family. As to quaternary structure, homohexamer. It depends on Mg(2+) as a cofactor.

Its subcellular location is the cytoplasm. It carries out the reaction (R)-4'-phosphopantetheine + ATP + H(+) = 3'-dephospho-CoA + diphosphate. It participates in cofactor biosynthesis; coenzyme A biosynthesis; CoA from (R)-pantothenate: step 4/5. Its function is as follows. Reversibly transfers an adenylyl group from ATP to 4'-phosphopantetheine, yielding dephospho-CoA (dPCoA) and pyrophosphate. The protein is Phosphopantetheine adenylyltransferase of Legionella pneumophila (strain Paris).